A 590-amino-acid polypeptide reads, in one-letter code: V-type ATP synthase alpha chain (590 aa).

232-239 (GPFGSGKT) provides a ligand contact to ATP.

It belongs to the ATPase alpha/beta chains family.

The enzyme catalyses ATP + H2O + 4 H(+)(in) = ADP + phosphate + 5 H(+)(out). Functionally, produces ATP from ADP in the presence of a proton gradient across the membrane. The V-type alpha chain is a catalytic subunit. This Thermoanaerobacter sp. (strain X514) protein is V-type ATP synthase alpha chain.